The sequence spans 122 residues: Large ribosomal subunit protein uL14 (122 aa).

This sequence belongs to the universal ribosomal protein uL14 family. Part of the 50S ribosomal subunit. Forms a cluster with proteins L3 and L19. In the 70S ribosome, L14 and L19 interact and together make contacts with the 16S rRNA in bridges B5 and B8.

Functionally, binds to 23S rRNA. Forms part of two intersubunit bridges in the 70S ribosome. In Desulforapulum autotrophicum (strain ATCC 43914 / DSM 3382 / VKM B-1955 / HRM2) (Desulfobacterium autotrophicum), this protein is Large ribosomal subunit protein uL14.